Here is a 265-residue protein sequence, read N- to C-terminus: Undecaprenyl-diphosphatase (265 aa).

The next 8 helical transmembrane spans lie at 1 to 21 (MDFI…FLPI), 39 to 61 (QGLA…YFRL), 85 to 105 (LAWA…MLTE), 115 to 135 (LIIA…DWAG), 149 to 169 (ILFI…RSGI), 187 to 207 (FSFL…ALDL), 218 to 238 (ALAL…HYFF), and 244 to 264 (IGML…FYLF).

The protein belongs to the UppP family.

It localises to the cell inner membrane. It carries out the reaction di-trans,octa-cis-undecaprenyl diphosphate + H2O = di-trans,octa-cis-undecaprenyl phosphate + phosphate + H(+). In terms of biological role, catalyzes the dephosphorylation of undecaprenyl diphosphate (UPP). Confers resistance to bacitracin. This chain is Undecaprenyl-diphosphatase, found in Nitrosococcus oceani (strain ATCC 19707 / BCRC 17464 / JCM 30415 / NCIMB 11848 / C-107).